A 496-amino-acid polypeptide reads, in one-letter code: probable leucine aminopeptidase 2 (496 aa).

A signal peptide spans Met1–Gly16. The 95-residue stretch at Pro111–Lys205 folds into the PA domain. Asn224 carries an N-linked (GlcNAc...) asparagine glycan. Zn(2+)-binding residues include His248 and Asp260. Glu292 (proton acceptor) is an active-site residue. Glu293 contacts Zn(2+). N-linked (GlcNAc...) asparagine glycosylation occurs at Asn307. Asp321 provides a ligand contact to Zn(2+). Residues Asn341 and Asn402 are each glycosylated (N-linked (GlcNAc...) asparagine). Residue His419 coordinates Zn(2+). Asn424 and Asn458 each carry an N-linked (GlcNAc...) asparagine glycan. Residues Lys475–Ala496 form a disordered region.

The protein belongs to the peptidase M28 family. M28A subfamily. Monomer. The cofactor is Zn(2+).

Its subcellular location is the secreted. In terms of biological role, extracellular aminopeptidase that releases a wide variety of amino acids from natural peptides. This is probable leucine aminopeptidase 2 (lap2) from Aspergillus oryzae (strain ATCC 42149 / RIB 40) (Yellow koji mold).